We begin with the raw amino-acid sequence, 770 residues long: Molybdenum cofactor sulfurase (770 aa).

Lys-243 carries the post-translational modification N6-(pyridoxal phosphate)lysine. The active site involves Cys-405. In terms of domain architecture, MOSC spans 611 to 769 (GDEVANWLCQ…LACGDPITVL (159 aa)). Ser-726 is subject to Phosphoserine.

Belongs to the class-V pyridoxal-phosphate-dependent aminotransferase family. MOCOS subfamily. Pyridoxal 5'-phosphate is required as a cofactor.

The catalysed reaction is Mo-molybdopterin + L-cysteine + AH2 = thio-Mo-molybdopterin + L-alanine + A + H2O. The protein operates within cofactor biosynthesis; molybdopterin biosynthesis. Sulfurates the molybdenum cofactor. Sulfation of molybdenum is essential for xanthine dehydrogenase (XDH) and aldehyde oxidase (ADO) enzymes in which molybdenum cofactor is liganded by 1 oxygen and 1 sulfur atom in active form. The protein is Molybdenum cofactor sulfurase of Drosophila grimshawi (Hawaiian fruit fly).